Here is a 201-residue protein sequence, read N- to C-terminus: Potassium-transporting ATPase KdpC subunit (201 aa).

A helical transmembrane segment spans residues 10–30 (VLLVALTAVTGLAYPLAVTGI).

This sequence belongs to the KdpC family. In terms of assembly, the system is composed of three essential subunits: KdpA, KdpB and KdpC.

It localises to the cell inner membrane. Part of the high-affinity ATP-driven potassium transport (or Kdp) system, which catalyzes the hydrolysis of ATP coupled with the electrogenic transport of potassium into the cytoplasm. This subunit acts as a catalytic chaperone that increases the ATP-binding affinity of the ATP-hydrolyzing subunit KdpB by the formation of a transient KdpB/KdpC/ATP ternary complex. This Methylorubrum extorquens (strain PA1) (Methylobacterium extorquens) protein is Potassium-transporting ATPase KdpC subunit.